The chain runs to 453 residues: MDFVSLVNTVNSFVWGPYMLVLLLGTGIFLTLRLGFMQIHTLPYALKLAFSKHQDETSEGDISHFQALMTALAATIGTGNIAGVATAYVLGGPGAIFWMWVTAFFGMATKYAEAVLAIKYRTVDDNGEMAGGPMYFLEKGLPDHGLGKILGVAFAFFGAFAAFGIGNMVQTNSVADAVASNFGVDPLITGFVLAIFTAAVILGGIKSIGKATGIIVPFMAVFYILAGLVILAMNIGYIIPAFGTIFSSAFNFSAGFGALIGTAIMWGVKRGVFSNEAGLGSAPIAAAAAKTDHPGRQALVSMTGTFLDTIVVCTITGLVLTIAGLKAFPGLTDLTGASLTAASFDALMPMGGLIVTIGLVFFAYSTVLGWSYYGEKCFEYLIGTKGIRLYRIAFVLVAFWGATASLPLVWNIADTLNGAMAIPNLIGLLLLSGVVVSETKAFNEIRKNEAKNA.

Over 1 to 17 the chain is Extracellular; it reads MDFVSLVNTVNSFVWGP. Residues 18–32 form a helical membrane-spanning segment; sequence YMLVLLLGTGIFLTL. Over 33–67 the chain is Cytoplasmic; that stretch reads RLGFMQIHTLPYALKLAFSKHQDETSEGDISHFQA. Residues 68–89 form a helical membrane-spanning segment; it reads LMTALAATIGTGNIAGVATAYV. Thr75 contributes to the D-alanine binding site. 2 residues coordinate L-alanine: Thr75 and Gly79. Asn80 is a binding site for D-alanine. Topologically, residues 90–92 are extracellular; sequence LGG. The chain crosses the membrane as a helical span at residues 93-111; the sequence is PGAIFWMWVTAFFGMATKY. The Cytoplasmic portion of the chain corresponds to 112 to 148; sequence AEAVLAIKYRTVDDNGEMAGGPMYFLEKGLPDHGLGK. Residues 149–179 form a helical membrane-spanning segment; it reads ILGVAFAFFGAFAAFGIGNMVQTNSVADAVA. Gln170 lines the D-alanine pocket. An L-alanine-binding site is contributed by Gln170. At 180–186 the chain is on the extracellular side; it reads SNFGVDP. Residues 187 to 202 form a helical membrane-spanning segment; it reads LITGFVLAIFTAAVIL. At 203-206 the chain is on the cytoplasmic side; that stretch reads GGIK. Residues 207 to 233 traverse the membrane as a helical segment; it reads SIGKATGIIVPFMAVFYILAGLVILAM. Over 234-258 the chain is Extracellular; the sequence is NIGYIIPAFGTIFSSAFNFSAGFGA. Residues 259 to 274 form a helical membrane-spanning segment; that stretch reads LIGTAIMWGVKRGVFS. 273-274 provides a ligand contact to D-alanine; that stretch reads FS. 273–276 lines the L-alanine pocket; sequence FSNE. Over 275 to 300 the chain is Cytoplasmic; sequence NEAGLGSAPIAAAAAKTDHPGRQALV. A helical membrane pass occupies residues 301-322; sequence SMTGTFLDTIVVCTITGLVLTI. Residues 323–350 are Extracellular-facing; that stretch reads AGLKAFPGLTDLTGASLTAASFDALMPM. A helical transmembrane segment spans residues 351 to 378; sequence GGLIVTIGLVFFAYSTVLGWSYYGEKCF. Over 379–386 the chain is Cytoplasmic; that stretch reads EYLIGTKG. A helical transmembrane segment spans residues 387-403; it reads IRLYRIAFVLVAFWGAT. Topologically, residues 404 to 408 are extracellular; the sequence is ASLPL. Residues 409-430 form a helical membrane-spanning segment; the sequence is VWNIADTLNGAMAIPNLIGLLL. The Cytoplasmic segment spans residues 431–453; the sequence is LSGVVVSETKAFNEIRKNEAKNA.

Belongs to the alanine or glycine:cation symporter (AGCS) (TC 2.A.25) family.

The protein resides in the cell membrane. It catalyses the reaction D-alanine(in) + Na(+)(in) = D-alanine(out) + Na(+)(out). It carries out the reaction L-alanine(in) + Na(+)(in) = L-alanine(out) + Na(+)(out). The catalysed reaction is glycine(in) + Na(+)(in) = glycine(out) + Na(+)(out). Functionally, catalyzes the sodium-dependent uptake of extracellular D-alanine and L-alanine. Can also transport glycine. Binds glycine and both enantiomers of alanine, while strictly excluding other amino acids. The chain is Sodium/alanine symporter AgcS from Methanococcus maripaludis (strain DSM 14266 / JCM 13030 / NBRC 101832 / S2 / LL).